Here is a 57-residue protein sequence, read N- to C-terminus: MAKAKGNREKIKLVSSAKTGHFYTTDKNKRNMPEKMEIKKFDPVIRQHVIYKEAKIK.

Belongs to the bacterial ribosomal protein bL33 family.

The sequence is that of Large ribosomal subunit protein bL33 from Shewanella amazonensis (strain ATCC BAA-1098 / SB2B).